The chain runs to 429 residues: High mobility group nucleosome-binding domain-containing protein 5 (429 aa).

Residues 1–429 are disordered; the sequence is MPKRKAAGDA…GEKGEPVSTV (429 aa). Position 29 is a phosphothreonine (Thr29). Positions 35 to 44 are enriched in basic residues; sequence KRASTSRKTK. Lys64 participates in a covalent cross-link: Glycyl lysine isopeptide (Lys-Gly) (interchain with G-Cter in SUMO2). Ser90 carries the post-translational modification Phosphoserine. Basic and acidic residues-rich tracts occupy residues 92–101 and 109–124; these read METEEVKEQI and GGEKKEAVVTKGKNDE. Lys98 is covalently cross-linked (Glycyl lysine isopeptide (Lys-Gly) (interchain with G-Cter in SUMO1); alternate). Lys98 participates in a covalent cross-link: Glycyl lysine isopeptide (Lys-Gly) (interchain with G-Cter in SUMO2); alternate. Residue Lys121 forms a Glycyl lysine isopeptide (Lys-Gly) (interchain with G-Cter in SUMO2) linkage. Positions 133 to 152 are enriched in acidic residues; the sequence is EKDEDEKEHEDTGEEGEDGE. Residues 153–195 are compositionally biased toward basic and acidic residues; it reads REGGLKEKPDVAEIEDAKEAKDDEEKEDKEKEDDKGGDGKKEE. Acidic residues predominate over residues 196 to 209; sequence EKDDEGEAETEEEV. Basic and acidic residues-rich tracts occupy residues 210 to 387 and 413 to 429; these read KEQQ…NEDR and NKDFKEDGEKGEPVSTV.

It belongs to the HMGN family. In terms of tissue distribution, expressed in trophoblast giant cells.

It is found in the nucleus. Preferentially binds to euchromatin and modulates cellular transcription by counteracting linker histone-mediated chromatin compaction. This Rattus norvegicus (Rat) protein is High mobility group nucleosome-binding domain-containing protein 5.